The following is a 323-amino-acid chain: Acetyl-coenzyme A carboxylase carboxyl transferase subunit alpha (323 aa).

The CoA carboxyltransferase C-terminal domain maps to 39–293 (RLSKKSQQLT…RRALADSLRQ (255 aa)).

This sequence belongs to the AccA family. As to quaternary structure, acetyl-CoA carboxylase is a heterohexamer composed of biotin carboxyl carrier protein (AccB), biotin carboxylase (AccC) and two subunits each of ACCase subunit alpha (AccA) and ACCase subunit beta (AccD).

It is found in the cytoplasm. The enzyme catalyses N(6)-carboxybiotinyl-L-lysyl-[protein] + acetyl-CoA = N(6)-biotinyl-L-lysyl-[protein] + malonyl-CoA. The protein operates within lipid metabolism; malonyl-CoA biosynthesis; malonyl-CoA from acetyl-CoA: step 1/1. In terms of biological role, component of the acetyl coenzyme A carboxylase (ACC) complex. First, biotin carboxylase catalyzes the carboxylation of biotin on its carrier protein (BCCP) and then the CO(2) group is transferred by the carboxyltransferase to acetyl-CoA to form malonyl-CoA. The protein is Acetyl-coenzyme A carboxylase carboxyl transferase subunit alpha of Burkholderia lata (strain ATCC 17760 / DSM 23089 / LMG 22485 / NCIMB 9086 / R18194 / 383).